Reading from the N-terminus, the 467-residue chain is Probable receptor-like protein kinase At3g17420 (467 aa).

A signal peptide spans 1-35 (MTSQLKRTLTKRYGVLELWEIIVIALFAAFIVILV). Residues 36 to 123 (LSVWLSFRKK…LPPSTPSTTA (88 aa)) are Extracellular-facing. Asparagine 50 carries N-linked (GlcNAc...) asparagine glycosylation. Serine 70 is modified (phosphoserine). The N-linked (GlcNAc...) asparagine glycan is linked to asparagine 79. Residues 102 to 126 (GSLEKKPLVGSHLPPSTPSTTAPSP) are disordered. Residues 124-144 (PSPLLGLPEVSHIGWGHWFTL) traverse the membrane as a helical segment. The Cytoplasmic segment spans residues 145–467 (RDLQLATNHF…DNDITTDAKI (323 aa)). The Protein kinase domain occupies 154-433 (FSKESIIGDG…MLESDEYPVM (280 aa)). ATP is bound by residues 160–168 (IGDGGYGVV) and lysine 182. Phosphotyrosine is present on tyrosine 227. Aspartate 280 acts as the Proton acceptor in catalysis. Phosphoserine is present on residues serine 284 and serine 313. Phosphothreonine occurs at positions 314 and 319. The residue at position 327 (tyrosine 327) is a Phosphotyrosine. The segment at 413–467 (DKRPKMSQVARMLESDEYPVMPREERRRRRNQNAETHRESTDTNKDNDITTDAKI) is disordered. The segment covering 447–467 (ETHRESTDTNKDNDITTDAKI) has biased composition (basic and acidic residues).

Belongs to the protein kinase superfamily. Ser/Thr protein kinase family.

The protein localises to the cell membrane. The enzyme catalyses L-seryl-[protein] + ATP = O-phospho-L-seryl-[protein] + ADP + H(+). It catalyses the reaction L-threonyl-[protein] + ATP = O-phospho-L-threonyl-[protein] + ADP + H(+). The polypeptide is Probable receptor-like protein kinase At3g17420 (Arabidopsis thaliana (Mouse-ear cress)).